Reading from the N-terminus, the 1040-residue chain is Multidrug resistance protein MdtB (1040 aa).

12 consecutive transmembrane segments (helical) span residues 16-36 (FILR…AGII), 347-367 (LMLA…NIPA), 369-389 (IIPA…MVFL), 396-416 (LTLM…IVVI), 440-460 (IGFT…PLLF), 472-492 (FAVT…TLTP), 537-557 (WLTL…WIFI), 863-883 (LGST…VLGV), 888-908 (FIHP…ALLA), 911-931 (IAGA…IGIV), 968-988 (ILMT…STGV), and 998-1018 (IGMV…TPVI).

It belongs to the resistance-nodulation-cell division (RND) (TC 2.A.6) family. MdtB subfamily. Part of a tripartite efflux system composed of MdtA, MdtB and MdtC. MdtB forms a heteromultimer with MdtC.

Its subcellular location is the cell inner membrane. This chain is Multidrug resistance protein MdtB, found in Cronobacter sakazakii (strain ATCC BAA-894) (Enterobacter sakazakii).